The chain runs to 251 residues: Bidirectional sugar transporter SWEET4 (251 aa).

Over 1–12 (MVNATVARNIAG) the chain is Extracellular. A glycan (N-linked (GlcNAc...) asparagine) is linked at N3. Residues 12-96 (GICGNVISLF…LAIFFFFSPT (85 aa)) enclose the MtN3/slv 1 domain. Residues 13–33 (ICGNVISLFLFLSPIPTFITI) traverse the membrane as a helical segment. The Cytoplasmic portion of the chain corresponds to 34-45 (YKKKKVEEYKAD). Residues 46 to 66 (PYLATVLNCALWVFYGLPMVQ) traverse the membrane as a helical segment. Topologically, residues 67-72 (PDSLLV) are extracellular. Residues 73-93 (ITINGTGLAIELVYLAIFFFF) form a helical membrane-spanning segment. Topologically, residues 94-103 (SPTSRKVKVG) are cytoplasmic. A helical membrane pass occupies residues 104–124 (LWLIGEMVFVGIVATCTLLLF). Over 125–132 (HTHNQRSS) the chain is Extracellular. A helical membrane pass occupies residues 133–153 (FVGIFCVIFVSLMYIAPLTIM). The MtN3/slv 2 domain maps to 133-216 (FVGIFCVIFV…LILYACYYKT (84 aa)). Topologically, residues 154-163 (SKVIKTKSVK) are cytoplasmic. The helical transmembrane segment at 164–186 (YMPFSLSLANFLNGVVWVIYALI) threads the bilayer. The Extracellular segment spans residues 187 to 190 (KFDL). A helical transmembrane segment spans residues 191 to 213 (FILIGNGLGTVSGAVQLILYACY). At 214–251 (YKTTPKDDEDEEDEENLSKVNSQLQLSGNSGQAKRVSA) the chain is on the cytoplasmic side. The interval 220–251 (DDEDEEDEENLSKVNSQLQLSGNSGQAKRVSA) is disordered. Positions 231–245 (SKVNSQLQLSGNSGQ) are enriched in polar residues.

It belongs to the SWEET sugar transporter family. Forms homooligomers and heterooligomers with SWEET8 and SWEET17.

Its subcellular location is the cell membrane. Mediates both low-affinity uptake and efflux of sugar across the plasma membrane. The polypeptide is Bidirectional sugar transporter SWEET4 (Arabidopsis thaliana (Mouse-ear cress)).